A 102-amino-acid polypeptide reads, in one-letter code: Circadian clock oscillator protein KaiB (102 aa).

The protein belongs to the KaiB family. In terms of assembly, undergoes a major conformational rearrangment; in the free state forms homotetramers with 2 dimers. When bound to the CI domain of KaiC switches to a monomeric thioredoxin-fold (KaiB(fs)). Monomers, homodimers and homotetramers are detected in solution; at low concentrations only monomers are seen. In vitro forms KaiC(6):KaiB(1) and KaiC(6):KaiB(6) complexes. Only associates with 'Ser-431'-phosphorylated KaiC (and not with doubly phosphorylated KaiC). Complex formation between KaiB and KaiC is regulated by the phosphorylation state of KaiC and by an ATP hydrolysis-driven conformation change in the CI ring of KaiC; complex formation is slow. Slow complex formation is crucial for the timing of the circadian period. In low resolution cryo-EM forms a KaiC(6):KaiB(6) complex. The KaiABC complex composition changes during the circadian cycle to control KaiC phosphorylation. Complexes KaiC(6), KaiA(2-4):KaiC(6), KaiB(6):KaiC(6) and KaiC(6):KaiB(6):KaiA(12) are among the most important forms, many form cooperatively. The KaiB:KaiC complex is more prevalent at 16 hours (in the dark) than at 4 hours (in the light) in the circadian cycle. The KaiA:KaiB complex is only found at 20-24 hours in the circadian cycle (subjective night). Binds to the CI domain of KaiC; SasA and KaiB compete to bind to the CI domain.

It is found in the cytoplasm. It localises to the cell membrane. Key component of the KaiABC oscillator complex, which constitutes the main circadian regulator in cyanobacteria. Complex composition changes during the circadian cycle to control KaiC phosphorylation. KaiA stimulates KaiC autophosphorylation, while KaiB sequesters KaiA, leading to KaiC autodephosphorylation. KaiA binding to the KaiC CII domain yields KaiA(2-4):KaiC(6) complexes which stimulate KaiC autophosphorylation. Phospho-Ser-431 KaiC accumulation triggers binding of KaiB to form the KaiB(6):KaiC(6) complex, leading to changes in the output regulators CikA and SasA. KaiB switches to a thioredoxin-like fold (KaiB(fs)) in complex with KaiC. KaiB(6):KaiC(6) formation exposes a site for KaiA binding that sequesters KaiA from the CII domain, making the KaiC(6):KaiB(6):KaiA(12) complex that results in KaiC autodephosphorylation. Complete dephosphorylation of KaiC leads to dissociation of KaiA(2):KaiB(1), completing 1 cycle of the Kai oscillator. Functionally, circadian oscillations can be generated in vitro by incubating KaiA, KaiB and KaiC with 1 mM ATP. The cycle is self-sustainable for at least 3 cycles and resistant to temperature changes. A very robust clock is reconstituted with KaiA, KaiB, KaiC, SasA, CikA and RpaA; output is measured by transcription from an appropriate reporter. Its function is as follows. A metamorphic protein which reversibly switches between an inactive tetrameric fold and a rare, thioredoxin-like monomeric fold (KaiB(fs)). KaiB(fs) binds phospho-KaiC, KaiA and CikA. KaiA and CikA compete for binding to KaiB(fs), and KaiB(fs) and SasA compete for binding to KaiC, thus the clock oscillator and output signal pathway are tightly coupled. The polypeptide is Circadian clock oscillator protein KaiB (Synechococcus elongatus (strain ATCC 33912 / PCC 7942 / FACHB-805) (Anacystis nidulans R2)).